Here is a 155-residue protein sequence, read N- to C-terminus: Small ribosomal subunit protein uS7cz/uS7cy (155 aa).

This sequence belongs to the universal ribosomal protein uS7 family. As to quaternary structure, part of the 30S ribosomal subunit.

It localises to the plastid. The protein resides in the chloroplast. One of the primary rRNA binding proteins, it binds directly to 16S rRNA where it nucleates assembly of the head domain of the 30S subunit. The chain is Small ribosomal subunit protein uS7cz/uS7cy (rps7-A) from Psilotum nudum (Whisk fern).